An 814-amino-acid polypeptide reads, in one-letter code: Valine--tRNA ligase (814 aa).

The short motif at 46–56 (PTVSGQLHIGH) is the 'HIGH' region element. Positions 536–540 (KMSKS) match the 'KMSKS' region motif. Residue Lys-539 coordinates ATP.

Belongs to the class-I aminoacyl-tRNA synthetase family. ValS type 2 subfamily. As to quaternary structure, monomer.

It localises to the cytoplasm. The enzyme catalyses tRNA(Val) + L-valine + ATP = L-valyl-tRNA(Val) + AMP + diphosphate. Catalyzes the attachment of valine to tRNA(Val). As ValRS can inadvertently accommodate and process structurally similar amino acids such as threonine, to avoid such errors, it has a 'posttransfer' editing activity that hydrolyzes mischarged Thr-tRNA(Val) in a tRNA-dependent manner. The sequence is that of Valine--tRNA ligase from Rickettsia typhi (strain ATCC VR-144 / Wilmington).